We begin with the raw amino-acid sequence, 526 residues long: Glutamate--cysteine ligase (526 aa).

It belongs to the glutamate--cysteine ligase type 1 family. Type 1 subfamily.

The catalysed reaction is L-cysteine + L-glutamate + ATP = gamma-L-glutamyl-L-cysteine + ADP + phosphate + H(+). Its pathway is sulfur metabolism; glutathione biosynthesis; glutathione from L-cysteine and L-glutamate: step 1/2. This Shewanella amazonensis (strain ATCC BAA-1098 / SB2B) protein is Glutamate--cysteine ligase.